A 122-amino-acid chain; its full sequence is MSTDSNTMFLKIEFGGGLELLFSNQRSHRITIPSTVPADNNTSVTTKDAASPATRPADVTYLLHHLRDHLLKEREELFMENGTVRPGILVLINDTDWELEGEGEYLLKDGDEIVLISTLHGG.

Polar residues predominate over residues 33–48 (PSTVPADNNTSVTTKD). The disordered stretch occupies residues 33–52 (PSTVPADNNTSVTTKDAASP). Position 122 is a 1-thioglycine (glycine 122). Glycine 122 is covalently cross-linked (Glycyl lysine isopeptide (Gly-Lys) (interchain with K-? in acceptor proteins)).

It belongs to the URM1 family. In terms of processing, C-terminal thiocarboxylation occurs in 2 steps, it is first acyl-adenylated (-COAMP) via the hesA/moeB/thiF part of UBA4, then thiocarboxylated (-COSH) via the rhodanese domain of UBA4.

It localises to the cytoplasm. It participates in tRNA modification; 5-methoxycarbonylmethyl-2-thiouridine-tRNA biosynthesis. Functionally, acts as a sulfur carrier required for 2-thiolation of mcm(5)S(2)U at tRNA wobble positions of cytosolic tRNA(Lys), tRNA(Glu) and tRNA(Gln). Serves as sulfur donor in tRNA 2-thiolation reaction by being thiocarboxylated (-COSH) at its C-terminus by the MOCS3 homolog UBA4. The sulfur is then transferred to tRNA to form 2-thiolation of mcm(5)S(2)U. Prior mcm(5) tRNA modification by the elongator complex is required for 2-thiolation. Also acts as a ubiquitin-like protein (UBL) that is covalently conjugated via an isopeptide bond to lysine residues of target proteins such as AHP1. The thiocarboxylated form serves as substrate for conjugation and oxidative stress specifically induces the formation of UBL-protein conjugates. In Laccaria bicolor (strain S238N-H82 / ATCC MYA-4686) (Bicoloured deceiver), this protein is Ubiquitin-related modifier 1.